The following is a 163-amino-acid chain: Transcription elongation factor GreA (163 aa).

The stretch at 12–73 forms a coiled coil; sequence YEKIQKEFEA…ELSDLLARAQ (62 aa).

Belongs to the GreA/GreB family.

Its function is as follows. Necessary for efficient RNA polymerase transcription elongation past template-encoded arresting sites. The arresting sites in DNA have the property of trapping a certain fraction of elongating RNA polymerases that pass through, resulting in locked ternary complexes. Cleavage of the nascent transcript by cleavage factors such as GreA or GreB allows the resumption of elongation from the new 3'terminus. GreA releases sequences of 2 to 3 nucleotides. The chain is Transcription elongation factor GreA from Nitratiruptor sp. (strain SB155-2).